The sequence spans 1108 residues: Retinal guanylyl cyclase 2 (1108 aa).

The signal sequence occupies residues 1 to 50 (MFLGPWPFSRLLSWFAISSRLSGQHGLPSSKFLRCLCLLALLPLLRWGQA). Topologically, residues 51 to 469 (LPYKIGVIGP…CQGGIDPALA (419 aa)) are extracellular. A disulfide bridge links Cys-104 with Cys-132. A helical membrane pass occupies residues 470–490 (MMVCFALLIALLSINGFAYFI). The Cytoplasmic portion of the chain corresponds to 491–1108 (RRRINKIQLI…AERQLVRNKP (618 aa)). The Protein kinase domain occupies 532–812 (FQIISEVQSG…DEIFNQFKTF (281 aa)). Residues 884-1014 (TLYFSDIVGF…DTVNTASRME (131 aa)) form the Guanylate cyclase domain.

Belongs to the adenylyl cyclase class-4/guanylyl cyclase family. As to quaternary structure, homodimer. Interacts with RD3; promotes the exit of GUCY2F from the endoplasmic reticulum and its trafficking to the photoreceptor outer segments. Post-translationally, there are 9 conserved cysteine residues in sensory guanylate cyclases, 6 in the extracellular domain, which may be involved in intra- or interchain disulfide bonds. As to expression, retina.

The protein localises to the membrane. It localises to the photoreceptor outer segment membrane. The catalysed reaction is GTP = 3',5'-cyclic GMP + diphosphate. Activated by GUCA1B when free calcium ions concentration is low, and inhibited by GUCA1B when free calcium ions concentration is high. Inhibited by RD3. In terms of biological role, responsible for the synthesis of cyclic GMP (cGMP) in rods and cones of photoreceptors. Plays an essential role in phototransduction, by mediating cGMP replenishment. May also participate in the trafficking of membrane-asociated proteins to the photoreceptor outer segment membrane. The chain is Retinal guanylyl cyclase 2 from Mus musculus (Mouse).